The chain runs to 312 residues: MEKWNHTSNDFILLGLLPPNQTGIFLLCLIILIFFLASVGNSAMIHLIHVDPRLHTPMYFLLSQLSLMDLMYISTTVPKMAYNFLSGQKGISFLGCGVQSFFFLTMACSEGLLLTSMAYDRYLAICHSLYYPIRMSKMMCVKMIGGSWTLGSINSLAHTVFALHIPYCRSRAIDHFFCDVPAMLLLACTDTWVYEYMVFVSTSLFLLFPFIGITSSCGRVLFAVYHMHSKEGRKKAFTTISTHLTVVIFYYAPFVYTYLRPRNLRSPAEDKILAVFYTILTPMLNPIIYSLRNKEVLGAMRRVFGIFSFLKE.

The Extracellular segment spans residues 1-24 (MEKWNHTSNDFILLGLLPPNQTGI). N-linked (GlcNAc...) asparagine glycans are attached at residues Asn-5 and Asn-20. A helical transmembrane segment spans residues 25-48 (FLLCLIILIFFLASVGNSAMIHLI). Over 49–56 (HVDPRLHT) the chain is Cytoplasmic. The chain crosses the membrane as a helical span at residues 57–78 (PMYFLLSQLSLMDLMYISTTVP). At 79 to 99 (KMAYNFLSGQKGISFLGCGVQ) the chain is on the extracellular side. The cysteines at positions 96 and 188 are disulfide-linked. The helical transmembrane segment at 100 to 119 (SFFFLTMACSEGLLLTSMAY) threads the bilayer. Over 120-138 (DRYLAICHSLYYPIRMSKM) the chain is Cytoplasmic. A helical transmembrane segment spans residues 139 to 157 (MCVKMIGGSWTLGSINSLA). Over 158–194 (HTVFALHIPYCRSRAIDHFFCDVPAMLLLACTDTWVY) the chain is Extracellular. A helical membrane pass occupies residues 195–218 (EYMVFVSTSLFLLFPFIGITSSCG). Residues 219–235 (RVLFAVYHMHSKEGRKK) lie on the Cytoplasmic side of the membrane. The chain crosses the membrane as a helical span at residues 236-258 (AFTTISTHLTVVIFYYAPFVYTY). Over 259-271 (LRPRNLRSPAEDK) the chain is Extracellular. Residues 272-291 (ILAVFYTILTPMLNPIIYSL) form a helical membrane-spanning segment. At 292–312 (RNKEVLGAMRRVFGIFSFLKE) the chain is on the cytoplasmic side.

The protein belongs to the G-protein coupled receptor 1 family.

Its subcellular location is the cell membrane. In terms of biological role, odorant receptor. In Homo sapiens (Human), this protein is Olfactory receptor 2L13 (OR2L13).